Reading from the N-terminus, the 279-residue chain is Type II iodothyronine deiodinase (279 aa).

The Lumenal segment spans residues 1–7 (MGLLSAD). The chain crosses the membrane as a helical; Signal-anchor for type III membrane protein span at residues 8–28 (LLITLQILPVFFSNCLFLALY). Residues 29 to 279 (DSVILLKHMV…TEDLSTDVSL (251 aa)) are Cytoplasmic-facing. U132 is a catalytic residue. Residues U132 and U265 are each a non-standard amino acid (selenocysteine).

This sequence belongs to the iodothyronine deiodinase family. Predominantly monomer. Can form homodimers but homodimerization is not essential for enzyme activity. In terms of tissue distribution, highly expressed in liver and in various parts of the brain including telencephalon, hippocampus, cerebellum, and brain stem, and weakly expressed in thyroid, lung, and small intestine. Not detected in skeletal muscle, heart atria or ventricle, gizzard or kidney.

It is found in the endoplasmic reticulum membrane. The catalysed reaction is 3,3',5-triiodo-L-thyronine + iodide + A + H(+) = L-thyroxine + AH2. It catalyses the reaction 3,3'-diiodo-L-thyronine + iodide + A + H(+) = 3,3',5'-triiodo-L-thyronine + AH2. It carries out the reaction 3'-iodo-L-thyronine + iodide + A + H(+) = 3',5'-diiodo-L-thyronine + AH2. The enzyme catalyses 3,3'-diiodothyronamine + iodide + A + H(+) = 3,3',5'-triiodothyronamine + AH2. The catalysed reaction is 3'-iodothyronamine + iodide + A + H(+) = 3',5'-diiodothyronamine + AH2. Not inhibited by N(6)-propylthiouracil. Functionally, plays a crucial role in the metabolism of thyroid hormones (TH) and has specific roles in TH activation and inactivation by deiodination. Catalyzes the deiodination of L-thyroxine (T4) to 3,5,3'-triiodothyronine (T3) and 3,3',5'-triiodothyronine (rT3) to 3,3'-diiodothyronine (3,3'-T2) via outer-ring deiodination (ORD). Catalyzes the deiodination of 3',5'-diiodothyronine (3',5'-T2) to 3'-monoiodothyronine (3'-T1) via ORD. Catalyzes the phenolic ring deiodinations of 3,3',5'-triiodothyronamine and 3',5'- diiodothyronamine. This Gallus gallus (Chicken) protein is Type II iodothyronine deiodinase (DIO2).